The primary structure comprises 317 residues: 2,3-dihydroxyphenylpropionate/2,3-dihydroxicinnamic acid 1,2-dioxygenase (317 aa).

His-115 acts as the Proton donor in catalysis. Residue His-179 is the Proton acceptor of the active site.

It belongs to the LigB/MhpB extradiol dioxygenase family. As to quaternary structure, homotetramer. Requires Fe(2+) as cofactor.

It carries out the reaction 3-(2,3-dihydroxyphenyl)propanoate + O2 = (2Z,4E)-2-hydroxy-6-oxonona-2,4-dienedioate + H(+). The catalysed reaction is (2E)-3-(2,3-dihydroxyphenyl)prop-2-enoate + O2 = (2Z,4E,7E)-2-hydroxy-6-oxonona-2,4,7-trienedioate + H(+). Its pathway is aromatic compound metabolism; 3-phenylpropanoate degradation. Functionally, catalyzes the non-heme iron(II)-dependent oxidative cleavage of 2,3-dihydroxyphenylpropionic acid and 2,3-dihydroxicinnamic acid into 2-hydroxy-6-ketononadienedioate and 2-hydroxy-6-ketononatrienedioate, respectively. The chain is 2,3-dihydroxyphenylpropionate/2,3-dihydroxicinnamic acid 1,2-dioxygenase from Paraburkholderia phymatum (strain DSM 17167 / CIP 108236 / LMG 21445 / STM815) (Burkholderia phymatum).